The sequence spans 181 residues: Adenine phosphoribosyltransferase (181 aa).

It belongs to the purine/pyrimidine phosphoribosyltransferase family. As to quaternary structure, homodimer.

The protein resides in the cytoplasm. It catalyses the reaction AMP + diphosphate = 5-phospho-alpha-D-ribose 1-diphosphate + adenine. The protein operates within purine metabolism; AMP biosynthesis via salvage pathway; AMP from adenine: step 1/1. Catalyzes a salvage reaction resulting in the formation of AMP, that is energically less costly than de novo synthesis. This is Adenine phosphoribosyltransferase from Acidobacterium capsulatum (strain ATCC 51196 / DSM 11244 / BCRC 80197 / JCM 7670 / NBRC 15755 / NCIMB 13165 / 161).